We begin with the raw amino-acid sequence, 195 residues long: RFKKIRRLGALPGLTSKRPRSGSDLKNQLRSGKRSQYRIRLEEKQKLRFHYGLTELQLLKYVHIAGKAKGSTGQILLQLLEMRLDNILFRLGMASTIPGARQLVNHRHILVNGRIVDIPSYRCKPRDIITTKNKQRSKALIQNFIASSPHQEELPNHLTIDPFQYKGLVNQIIDSKWIGLKINELLVVEYYSRQT.

The S4 RNA-binding domain maps to 82 to 143 (MRLDNILFRL…KQRSKALIQN (62 aa)).

The protein belongs to the universal ribosomal protein uS4 family. In terms of assembly, part of the 30S ribosomal subunit. Contacts protein S5. The interaction surface between S4 and S5 is involved in control of translational fidelity.

It is found in the plastid. It localises to the chloroplast. Functionally, one of the primary rRNA binding proteins, it binds directly to 16S rRNA where it nucleates assembly of the body of the 30S subunit. Its function is as follows. With S5 and S12 plays an important role in translational accuracy. The chain is Small ribosomal subunit protein uS4c (rps4) from Watsonia angusta.